The chain runs to 360 residues: DNA replication and repair protein RecF (360 aa).

33-40 (GENGSGKT) contacts ATP.

This sequence belongs to the RecF family.

The protein localises to the cytoplasm. Its function is as follows. The RecF protein is involved in DNA metabolism; it is required for DNA replication and normal SOS inducibility. RecF binds preferentially to single-stranded, linear DNA. It also seems to bind ATP. In Rickettsia rickettsii (strain Iowa), this protein is DNA replication and repair protein RecF.